Reading from the N-terminus, the 301-residue chain is Nucleotide-binding protein Helmi_06460 (301 aa).

Residue 17–24 (GLSGAGKS) coordinates ATP. GTP is bound at residue 68–71 (DIRG).

The protein belongs to the RapZ-like family.

In terms of biological role, displays ATPase and GTPase activities. In Heliobacterium modesticaldum (strain ATCC 51547 / Ice1), this protein is Nucleotide-binding protein Helmi_06460.